The primary structure comprises 421 residues: 3-alpha-mycarosylerythronolide B desosaminyl transferase (421 aa).

The signal sequence occupies residues 1–23 (MRVVFSSMASKSHLFGLVPLAWA).

Belongs to the glycosyltransferase 28 family. Heterotetramer composed of EryCII and EryCIII.

The enzyme catalyses 3-O-alpha-L-mycarosylerythronolide B + dTDP-alpha-D-desosamine = erythromycin D + dTDP + H(+). It participates in antibiotic biosynthesis; erythromycin biosynthesis. In terms of biological role, catalyzes the conversion of alpha-L-mycarosylerythronolide B into erythromycin D in the erythromycin biosynthesis pathway. The sequence is that of 3-alpha-mycarosylerythronolide B desosaminyl transferase (eryCIII) from Saccharopolyspora erythraea (strain ATCC 11635 / DSM 40517 / JCM 4748 / NBRC 13426 / NCIMB 8594 / NRRL 2338).